The following is an 865-amino-acid chain: Protein fluG (865 aa).

Positions 442–533 constitute a GS beta-grasp domain; it reads PGVKYVWTQF…VMTWWKSEQG (92 aa). In terms of domain architecture, GS catalytic spans 540 to 865; the sequence is PRTNLLNINN…ARRKWLVERY (326 aa).

This sequence belongs to the glutamine synthetase family.

It localises to the cytoplasm. Functionally, may function as a GSI-related enzyme in synthesizing a small diffusible factor that acts as an extracellular signal directing asexual sporulation and perhaps other aspects of colony growth. May be involved in brlA activation (an early transcriptional regulator for conidiation specific gene). In Emericella nidulans (strain FGSC A4 / ATCC 38163 / CBS 112.46 / NRRL 194 / M139) (Aspergillus nidulans), this protein is Protein fluG (fluG).